A 256-amino-acid polypeptide reads, in one-letter code: Dihydromonacolin L-[lovastatin nonaketide synthase] thioesterase (256 aa).

Residues Ser-122, Asp-201, and His-229 each act as charge relay system in the active site.

The protein belongs to the LovG family.

It carries out the reaction dihydromonacolin L-[lovastatin nonaketide synthase] + H2O = holo-[lovastatin nonaketide synthase] + dihydromonacolin L carboxylate + H(+). It functions in the pathway polyketide biosynthesis; lovastatin biosynthesis. Its function is as follows. Esterase; part of the gene cluster that mediates the biosynthesis of lovastatin (also known as mevinolin, mevacor or monacolin K), a hypolipidemic inhibitor of (3S)-hydroxymethylglutaryl-coenzyme A (HMG-CoA) reductase (HMGR). The first step in the biosynthesis of lovastatin is the production of dihydromonacolin L acid by the lovastatin nonaketide synthase lovB and the trans-acting enoyl reductase lovC via condensation of one acetyl-CoA unit and 8 malonyl-CoA units. Dihydromonacolin L acid is released from lovB by the thioesterase lovG. Next, dihydromonacolin L acid is oxidized by the dihydromonacolin L monooxygenase lovA twice to form monacolin J acid. The 2-methylbutyrate moiety of lovastatin is synthesized by the lovastatin diketide synthase lovF via condensation of one acetyl-CoA unit and one malonyl-CoA unit. Finally, the covalent attachment of this moiety to monacolin J acid is catalyzed by the transesterase lovD to yield lovastatin. LovD has broad substrate specificity and can also convert monacolin J to simvastatin using alpha-dimethylbutanoyl-S-methyl-3-mercaptopropionate (DMB-S-MMP) as the thioester acyl donor, and can also catalyze the reverse reaction and function as hydrolase in vitro. LovD has much higher activity with LovF-bound 2-methylbutanoate than with free diketide substrates. Functionally, esterase that catalyzes the release of covalently bound dihydromonacolin L from LovB during lovastatin biosynthesis. This is Dihydromonacolin L-[lovastatin nonaketide synthase] thioesterase from Aspergillus terreus.